The chain runs to 231 residues: Large ribosomal subunit protein uL1 (231 aa).

It belongs to the universal ribosomal protein uL1 family. As to quaternary structure, part of the 50S ribosomal subunit.

Functionally, binds directly to 23S rRNA. The L1 stalk is quite mobile in the ribosome, and is involved in E site tRNA release. Protein L1 is also a translational repressor protein, it controls the translation of the L11 operon by binding to its mRNA. This Macrococcus caseolyticus (strain JCSC5402) (Macrococcoides caseolyticum) protein is Large ribosomal subunit protein uL1.